Here is a 155-residue protein sequence, read N- to C-terminus: Sweet protein mabinlin-2 (155 aa).

The signal sequence occupies residues 1–20 (MAKLIFLFATLALFVLLANA). The propeptide occupies 21–35 (SIQTTVIEVDEEEDN). Q36 is modified (pyrrolidone carboxylic acid). Intrachain disulfides connect C40–C103, C53–C92, C93–C141, and C105–C149. Positions 64–86 (GGQPDELEDEVEDDNDDENQPRR) are disordered. The span at 68 to 81 (DELEDEVEDDNDDE) shows a compositional bias: acidic residues. A propeptide spanning residues 69-82 (ELEDEVEDDNDDEN) is cleaved from the precursor. Q83 is modified (pyrrolidone carboxylic acid). A propeptide is located at residue P155.

Belongs to the 2S seed storage albumins family. In terms of assembly, heterodimer of a small A and a large B chain linked by disulfide bonds.

Heat stable 2S seed storage protein having sweetness-inducing activity. This chain is Sweet protein mabinlin-2, found in Capparis masaikai (Mabinlang).